The sequence spans 1035 residues: Beta-galactosidase (1035 aa).

Residues Asn-109 and Asp-208 each contribute to the substrate site. Asp-208 is a Na(+) binding site. Mg(2+) contacts are provided by Glu-424, His-426, and Glu-469. Substrate-binding positions include Glu-469 and 545-548 (EYAH). Glu-469 (proton donor) is an active-site residue. The Nucleophile role is filled by Glu-545. Asn-605 provides a ligand contact to Mg(2+). Na(+) contacts are provided by Phe-609 and Asn-612. The substrate site is built by Asn-612 and Trp-1011.

The protein belongs to the glycosyl hydrolase 2 family. In terms of assembly, homotetramer. It depends on Mg(2+) as a cofactor. The cofactor is Na(+).

The catalysed reaction is Hydrolysis of terminal non-reducing beta-D-galactose residues in beta-D-galactosides.. The chain is Beta-galactosidase from Klebsiella pneumoniae (strain 342).